Consider the following 158-residue polypeptide: Anaerobic nitrite reductase AHB2 (158 aa).

Residues 5–154 (GFTEKQEALV…LALAIKTEMK (150 aa)) form the Globin domain. The Homodimerization signature appears at 38–42 (EIAPA). The heme b site is built by serine 48, lysine 62, histidine 66, and histidine 101. A Homodimerization motif is present at residues 108–120 (DPHFEVVKEALLR).

Belongs to the plant globin family. In terms of assembly, unable to dimerize. Heme b serves as cofactor. In terms of tissue distribution, expressed in rosette leaves but not in roots.

Its subcellular location is the cytoplasm. The protein resides in the nucleus. It catalyses the reaction Fe(III)-heme b-[protein] + nitric oxide + H2O = Fe(II)-heme b-[protein] + nitrite + 2 H(+). Functionally, phytoglobin that reduces nitrite to nitric oxide (NO) under anoxic conditions (e.g. during flooding or in waterlogged soil). May not function as an oxygen storage or transport protein. Has an unusually high affinity for O(2) through an hexacoordinate heme iron because of a very low dissociation constant. The chain is Anaerobic nitrite reductase AHB2 from Arabidopsis thaliana (Mouse-ear cress).